The following is a 1214-amino-acid chain: Spliceosome-associated protein 130 A (1214 aa).

The disordered stretch occupies residues 817-848 (AGGVGENGNGNADQMENGADDEDKEDPLSDEQ). Over residues 834 to 845 (GADDEDKEDPLS) the composition is skewed to acidic residues.

This sequence belongs to the RSE1 family. Identified in the spliceosome C complex. Component of the U11/U12 snRNPs that are part of the U12-type spliceosome. Component of splicing factor SF3B complex. Expressed at low levels in roots, leaves, inflorescence and, to a lower extent, in siliques.

It is found in the nucleus. Its function is as follows. Subunit of the splicing factor SF3B required for 'A' complex assembly formed by the stable binding of U2 snRNP to the branchpoint sequence (BPS) in pre-mRNA. Sequence independent binding of SF3A/SF3B complex upstream of the branch site is essential, it may anchor U2 snRNP to the pre-mRNA. May also be involved in the assembly of the 'E' complex. Also belongs to the minor U12-dependent spliceosome, which is involved in the splicing of rare class of nuclear pre-mRNA intron. Required for pollen and ovule development, especially during the transition from microspore to the bicellular stage in pollen development. Involved in the accumulation of QRT1 and QRT3. The chain is Spliceosome-associated protein 130 A from Arabidopsis thaliana (Mouse-ear cress).